The primary structure comprises 188 residues: Elongation factor P-like protein (188 aa).

This sequence belongs to the elongation factor P family.

The protein is Elongation factor P-like protein of Xylella fastidiosa (strain M23).